The following is a 380-amino-acid chain: UDP-3-O-acylglucosamine N-acyltransferase (380 aa).

The active-site Proton acceptor is histidine 263.

It belongs to the transferase hexapeptide repeat family. LpxD subfamily. Homotrimer.

It catalyses the reaction a UDP-3-O-[(3R)-3-hydroxyacyl]-alpha-D-glucosamine + a (3R)-hydroxyacyl-[ACP] = a UDP-2-N,3-O-bis[(3R)-3-hydroxyacyl]-alpha-D-glucosamine + holo-[ACP] + H(+). Its pathway is bacterial outer membrane biogenesis; LPS lipid A biosynthesis. Its function is as follows. Catalyzes the N-acylation of UDP-3-O-acylglucosamine using 3-hydroxyacyl-ACP as the acyl donor. Is involved in the biosynthesis of lipid A, a phosphorylated glycolipid that anchors the lipopolysaccharide to the outer membrane of the cell. This is UDP-3-O-acylglucosamine N-acyltransferase from Rhodopirellula baltica (strain DSM 10527 / NCIMB 13988 / SH1).